The primary structure comprises 247 residues: Isoprenyl transferase (247 aa).

The active site involves aspartate 18. Aspartate 18 contributes to the Mg(2+) binding site. Substrate contacts are provided by residues glycine 19 to arginine 22, tryptophan 23, arginine 31, histidine 35, and serine 63 to glutamate 65. Asparagine 66 (proton acceptor) is an active-site residue. Residues tryptophan 67, arginine 69, arginine 186, and arginine 192–serine 194 contribute to the substrate site. Residue glutamate 205 coordinates Mg(2+).

The protein belongs to the UPP synthase family. As to quaternary structure, homodimer. It depends on Mg(2+) as a cofactor.

Catalyzes the condensation of isopentenyl diphosphate (IPP) with allylic pyrophosphates generating different type of terpenoids. This chain is Isoprenyl transferase, found in Agrobacterium fabrum (strain C58 / ATCC 33970) (Agrobacterium tumefaciens (strain C58)).